The chain runs to 347 residues: Ribosomal RNA large subunit methyltransferase M (347 aa).

Residues S184, 217 to 220 (APGG), D236, D256, and D272 each bind S-adenosyl-L-methionine. K301 (proton acceptor) is an active-site residue.

This sequence belongs to the class I-like SAM-binding methyltransferase superfamily. RNA methyltransferase RlmE family. RlmM subfamily. Monomer.

The protein localises to the cytoplasm. It catalyses the reaction cytidine(2498) in 23S rRNA + S-adenosyl-L-methionine = 2'-O-methylcytidine(2498) in 23S rRNA + S-adenosyl-L-homocysteine + H(+). Catalyzes the 2'-O-methylation at nucleotide C2498 in 23S rRNA. The sequence is that of Ribosomal RNA large subunit methyltransferase M from Xanthomonas campestris pv. campestris (strain 8004).